Consider the following 107-residue polypeptide: uncharacterized protein (107 aa).

Transmembrane regions (helical) follow at residues 9-28 (FLVF…LIME), 33-50 (SYII…SLNI), 55-72 (LAIA…AIHV), and 77-99 (YRVI…YLKG).

It is found in the cell membrane. This is an uncharacterized protein from Archaeoglobus fulgidus (strain ATCC 49558 / DSM 4304 / JCM 9628 / NBRC 100126 / VC-16).